We begin with the raw amino-acid sequence, 33 residues long: uncharacterized protein (33 aa).

Positions methionine 1 to leucine 33 are disordered.

This is an uncharacterized protein from Caenorhabditis elegans.